The following is a 355-amino-acid chain: MTASTSVAVGCAVGIPVGVGIIIAVCFWFNLQKRYKREEQDDRELERAIYDESGFVSFDNFGPLRDSKDEAALASSELKNPDHTSGSSEGSAHPEEKDGKSRDQEKPLGKKNSKYYVPAYRRKINLLQVRNNNYGNNARQKSVVDLPSINNSSNVSLSSSQRHITKRQISVYDQMVPVISDEGPKFFADPSSDTNTSNDQNKASMIELKHNTRQSSNENLIRKLQNQDFGSYYPRRASSSFLNGNISNASFHTRNSSITSVNKRDALEDVFATPKSAAQSQLPNTFDKDNEGIDADHSVKDSRSAITDKDKDIYKLQNNYDVGNIGEIAEEDQYENEFTNYSQSKREFIESLRPK.

Residues 1 to 8 (MTASTSVA) lie on the Extracellular side of the membrane. A helical; Signal-anchor for type III membrane protein transmembrane segment spans residues 9-29 (VGCAVGIPVGVGIIIAVCFWF). At 30 to 355 (NLQKRYKREE…REFIESLRPK (326 aa)) the chain is on the cytoplasmic side. Residues 70 to 114 (EAALASSELKNPDHTSGSSEGSAHPEEKDGKSRDQEKPLGKKNSK) form a disordered region. Over residues 92 to 108 (AHPEEKDGKSRDQEKPL) the composition is skewed to basic and acidic residues. Residue Ser-142 is modified to Phosphoserine. Residue Thr-273 is modified to Phosphothreonine.

The protein belongs to the SKG1 family.

It is found in the cell membrane. Its subcellular location is the bud membrane. Functionally, plays a role in cell wall integrity. Affects the cell wall polymer composition in the growing region of the cell. This is Suppressor of lethality of KEX2 GAS1 double null mutant protein 1 (SKG1) from Saccharomyces cerevisiae (strain JAY291) (Baker's yeast).